A 246-amino-acid chain; its full sequence is NAD-dependent protein deacetylase (246 aa).

A Deacetylase sirtuin-type domain is found at 1 to 246 (MKMKEFLDLL…RRVMEEGGIS (246 aa)). The NAD(+) site is built by Ala22, Thr26, Phe33, Arg34, Gln98, Ile100, Asp101, and His116. Residue Phe33 participates in nicotinamide binding. Residues Ile100 and Asp101 each coordinate nicotinamide. Catalysis depends on His116, which acts as the Proton acceptor. 4 residues coordinate Zn(2+): Cys124, Cys127, Cys148, and Cys151. Ser189, Ser190, Asn214, Leu215, Gly216, Asp231, and Val232 together coordinate NAD(+).

It belongs to the sirtuin family. Class U subfamily. It depends on Zn(2+) as a cofactor.

It localises to the cytoplasm. The enzyme catalyses N(6)-acetyl-L-lysyl-[protein] + NAD(+) + H2O = 2''-O-acetyl-ADP-D-ribose + nicotinamide + L-lysyl-[protein]. Its activity is regulated as follows. Non-competitively inhibited by nicotinamide in vitro and in vivo, but not by nicotinic acid. Nicotinamide inhibits the deacetylation activity by reacting with a reaction intermediate. NAD-dependent protein deacetylase which modulates the activities of several enzymes which are inactive in their acetylated form. Also has depropionylation activity in vitro. Also able to ADP-ribosylate peptide substrates with Arg or Lys in the +2 position. The role of this function in vivo is not clear. In Thermotoga maritima (strain ATCC 43589 / DSM 3109 / JCM 10099 / NBRC 100826 / MSB8), this protein is NAD-dependent protein deacetylase.